Reading from the N-terminus, the 470-residue chain is Xaa-Pro aminopeptidase 2 (470 aa).

5 residues coordinate Mn(2+): Asp287, Asp299, His382, Glu413, and Glu437.

This sequence belongs to the peptidase M24B family. Homodimer. Requires Mn(2+) as cofactor.

It carries out the reaction Release of any N-terminal amino acid, including proline, that is linked to proline, even from a dipeptide or tripeptide.. This Streptomyces coelicolor (strain ATCC BAA-471 / A3(2) / M145) protein is Xaa-Pro aminopeptidase 2 (pepP2).